The sequence spans 299 residues: ATP phosphoribosyltransferase (299 aa).

Belongs to the ATP phosphoribosyltransferase family. Long subfamily. The cofactor is Mg(2+).

Its subcellular location is the cytoplasm. It carries out the reaction 1-(5-phospho-beta-D-ribosyl)-ATP + diphosphate = 5-phospho-alpha-D-ribose 1-diphosphate + ATP. It functions in the pathway amino-acid biosynthesis; L-histidine biosynthesis; L-histidine from 5-phospho-alpha-D-ribose 1-diphosphate: step 1/9. Feedback inhibited by histidine. In terms of biological role, catalyzes the condensation of ATP and 5-phosphoribose 1-diphosphate to form N'-(5'-phosphoribosyl)-ATP (PR-ATP). Has a crucial role in the pathway because the rate of histidine biosynthesis seems to be controlled primarily by regulation of HisG enzymatic activity. In Shewanella sp. (strain ANA-3), this protein is ATP phosphoribosyltransferase.